The chain runs to 993 residues: Ephrin type-A receptor 7 (993 aa).

The signal sequence occupies residues 1 to 27 (MVLRSRLPPWIMLCSVWLLRFAHTGEA). Over 28 to 550 (QAAKEVILLD…TAVSSEQNPV (523 aa)) the chain is Extracellular. Positions 32–210 (EVILLDSKAQ…YYKKCWSIIE (179 aa)) constitute an Eph LBD domain. Fibronectin type-III domains lie at 331-441 (PPSA…TGQA) and 442-537 (APSQ…TLEE). Residues N343 and N410 are each glycosylated (N-linked (GlcNAc...) asparagine). A helical membrane pass occupies residues 551–571 (IIIAVVAVAGTIILVFMVFGF). Over 572–993 (IIGRRHCGYS…LHLHGTGIQV (422 aa)) the chain is Cytoplasmic. A phosphotyrosine; by autocatalysis mark is found at Y603 and Y609. The Protein kinase domain occupies 628–889 (IKIERVIGAG…QIVGILDKMI (262 aa)). Residues 634–642 (IGAGEFGEV) and K660 each bind ATP. D753 (proton acceptor) is an active-site residue. Residues Y786 and Y935 each carry the phosphotyrosine; by autocatalysis modification. The SAM domain maps to 918-982 (TTFCSVGEWL…MSSIQTMRAQ (65 aa)). A PDZ-binding motif is present at residues 991–993 (IQV).

Belongs to the protein kinase superfamily. Tyr protein kinase family. Ephrin receptor subfamily. As to quaternary structure, heterotetramer upon binding of the ligand. The heterotetramer is composed of an ephrin dimer and a receptor dimer. Oligomerization is probably required to induce biological responses. In terms of processing, phosphorylated.

The protein localises to the cell membrane. It catalyses the reaction L-tyrosyl-[protein] + ATP = O-phospho-L-tyrosyl-[protein] + ADP + H(+). Functionally, receptor tyrosine kinase which binds promiscuously GPI-anchored ephrin-A family ligands residing on adjacent cells, leading to contact-dependent bidirectional signaling into neighboring cells. The signaling pathway downstream of the receptor is referred to as forward signaling while the signaling pathway downstream of the ephrin ligand is referred to as reverse signaling. Among GPI-anchored ephrin-A ligands, EFNA5 is a cognate/functional ligand for EPHA7 and their interaction regulates brain development modulating cell-cell adhesion and repulsion. Has a repellent activity on axons and is for instance involved in the guidance of corticothalamic axons and in the proper topographic mapping of retinal axons to the colliculus. May also regulate brain development through a caspase(CASP3)-dependent proapoptotic activity. Forward signaling may result in activation of components of the ERK signaling pathway including MAP2K1, MAP2K2, MAPK1 and MAPK3 which are phosphorylated upon activation of EPHA7. This chain is Ephrin type-A receptor 7 (EPHA7), found in Gallus gallus (Chicken).